Here is a 155-residue protein sequence, read N- to C-terminus: Ribosome-binding factor A (155 aa).

It belongs to the RbfA family. As to quaternary structure, monomer. Binds 30S ribosomal subunits, but not 50S ribosomal subunits or 70S ribosomes.

It localises to the cytoplasm. In terms of biological role, one of several proteins that assist in the late maturation steps of the functional core of the 30S ribosomal subunit. Associates with free 30S ribosomal subunits (but not with 30S subunits that are part of 70S ribosomes or polysomes). Required for efficient processing of 16S rRNA. May interact with the 5'-terminal helix region of 16S rRNA. The chain is Ribosome-binding factor A from Methylocella silvestris (strain DSM 15510 / CIP 108128 / LMG 27833 / NCIMB 13906 / BL2).